The following is a 426-amino-acid chain: FK506-binding protein 3 (426 aa).

2 disordered regions span residues 37–143 (SLDP…PKHQ) and 171–314 (TGNY…KKKK). Composition is skewed to acidic residues over residues 65-94 (DYFEDDDDDEEEDDEEDELDDEEEEEEAEE), 111-131 (EDEEEDDEEEDDEDNDEDDVS), and 181-225 (QDEE…SEEE). Basic and acidic residues-rich tracts occupy residues 226-257 (GTPKIEEIVEEKEKVKESPKESKKRVAEESTS), 264-278 (KKDEKKSVQFSKELE), and 287-311 (VEKDNKKATPTKDKKETPVKDDGDK). A PPIase FKBP-type domain is found at 340-426 (GAKVGIRYIG…TFDIKLVSLK (87 aa)).

The protein belongs to the FKBP-type PPIase family. FKBP3/4 subfamily.

The protein resides in the nucleus. Its subcellular location is the nucleolus. It catalyses the reaction [protein]-peptidylproline (omega=180) = [protein]-peptidylproline (omega=0). Inhibited by both FK506 and rapamycin. PPIases accelerate the folding of proteins. It catalyzes the cis-trans isomerization of proline imidic peptide bonds in oligopeptides. This is FK506-binding protein 3 (FPR3) from Candida albicans (strain SC5314 / ATCC MYA-2876) (Yeast).